The chain runs to 147 residues: Large ribosomal subunit protein bL9 (147 aa).

This sequence belongs to the bacterial ribosomal protein bL9 family.

Functionally, binds to the 23S rRNA. The protein is Large ribosomal subunit protein bL9 of Thermodesulfovibrio yellowstonii (strain ATCC 51303 / DSM 11347 / YP87).